Here is a 303-residue protein sequence, read N- to C-terminus: MSFTVKVKEELLGLGTKSKSELAAIMKMSGSLGIASQGLTLSITTENAKIARHIYELLLSFYQVKSDIRHHQKTNLRKNRVYTVFLDEKVEDILSDLHLADAFFGIQEGIDPLILSDDEASRAYLRGAFLSNGSMRDPESGKYQLEIVSVYLDHAQGLASLMQRFLLDAKTIERKKGAVTYLQRAEDIMDFLIVVGAMEAMAEFEAVKILRETRNDLNRANNAETANIARTVTASMKTINNIVKIMETSGLENLPIDLQEVAHLRVNHPDYSIQQLADSLSKPLTKSGVNHRLRKINKIADEL.

A DNA-binding region (H-T-H motif) is located at residues 272–303 (SIQQLADSLSKPLTKSGVNHRLRKINKIADEL).

This sequence belongs to the WhiA family.

Involved in cell division and chromosome segregation. The protein is Probable cell division protein WhiA of Streptococcus gordonii (strain Challis / ATCC 35105 / BCRC 15272 / CH1 / DL1 / V288).